The chain runs to 416 residues: Gamma-glutamyl phosphate reductase (416 aa).

Belongs to the gamma-glutamyl phosphate reductase family.

It localises to the cytoplasm. It carries out the reaction L-glutamate 5-semialdehyde + phosphate + NADP(+) = L-glutamyl 5-phosphate + NADPH + H(+). Its pathway is amino-acid biosynthesis; L-proline biosynthesis; L-glutamate 5-semialdehyde from L-glutamate: step 2/2. In terms of biological role, catalyzes the NADPH-dependent reduction of L-glutamate 5-phosphate into L-glutamate 5-semialdehyde and phosphate. The product spontaneously undergoes cyclization to form 1-pyrroline-5-carboxylate. This is Gamma-glutamyl phosphate reductase from Vibrio vulnificus (strain YJ016).